We begin with the raw amino-acid sequence, 396 residues long: tRNA (guanine-N(7)-)-methyltransferase (396 aa).

Residues Glu125, Glu150, and Asp177 each contribute to the S-adenosyl-L-methionine site. 2 residues coordinate substrate: Lys203 and Asp233.

It belongs to the class I-like SAM-binding methyltransferase superfamily. TrmB family.

The catalysed reaction is guanosine(46) in tRNA + S-adenosyl-L-methionine = N(7)-methylguanosine(46) in tRNA + S-adenosyl-L-homocysteine. It participates in tRNA modification; N(7)-methylguanine-tRNA biosynthesis. In terms of biological role, catalyzes the formation of N(7)-methylguanine at position 46 (m7G46) in tRNA. The polypeptide is tRNA (guanine-N(7)-)-methyltransferase (Helicobacter hepaticus (strain ATCC 51449 / 3B1)).